We begin with the raw amino-acid sequence, 177 residues long: Putative 3-methyladenine DNA glycosylase (177 aa).

It belongs to the DNA glycosylase MPG family.

The polypeptide is Putative 3-methyladenine DNA glycosylase (Rickettsia felis (strain ATCC VR-1525 / URRWXCal2) (Rickettsia azadi)).